The following is a 143-amino-acid chain: Antitumor antibiotic C-1027 apoprotein (143 aa).

An N-terminal signal peptide occupies residues 1–33; sequence MSLRHMSRRASRFGVVAVASIGLAAAAQSVAFA. Intrachain disulfides connect cysteine 69–cysteine 78 and cysteine 119–cysteine 124.

The protein belongs to the neocarzinostatin family.

Its function is as follows. Binds non-covalently to a chromophore which is the cytotoxic and mutagenic component of the antibiotic. The chromophore binds to DNA as a weak intercalator and causes single- and double-strand breaks. The chain is Antitumor antibiotic C-1027 apoprotein (cagA) from Streptomyces globisporus.